The following is a 1331-amino-acid chain: Alpha,alpha-trehalose-phosphate synthase [UDP-forming] 1 (1331 aa).

Residues 1-13 are compositionally biased toward polar residues; sequence MTDTATGVHSNAN. Disordered stretches follow at residues 1–50, 71–118, and 1312–1331; these read MTDT…DNDP, TGKE…SGQL, and PMDQ…SFGN. The segment covering 39–50 has biased composition (basic and acidic residues); the sequence is DPFDRPKNDNDP. A compositionally biased stretch (acidic residues) spans 77-98; that stretch reads LDESDDMTENEDHDEMANEDDG. A compositionally biased stretch (basic and acidic residues) spans 102 to 112; that stretch reads NEKKVETRKMD. Over residues 1318-1331 the composition is skewed to polar residues; it reads SSTLGASLGTSFGN.

This sequence in the N-terminal section; belongs to the glycosyltransferase 20 family. In the C-terminal section; belongs to the gob-1 trehalose phosphatase family.

The catalysed reaction is D-glucose 6-phosphate + UDP-alpha-D-glucose = alpha,alpha-trehalose 6-phosphate + UDP + H(+). Its function is as follows. Catalyzes the production of trehalose from glucose-6-phosphate and UDP-alpha-D-glucose in a 2 step process. The protein is Alpha,alpha-trehalose-phosphate synthase [UDP-forming] 1 (tps-1) of Caenorhabditis elegans.